The sequence spans 429 residues: Bifunctional protein GlmU (429 aa).

The segment at 1–223 (MKTSILILAA…EDEFMGINDK (223 aa)) is pyrophosphorylase. Residues 8-11 (LAAG), Lys-22, and 81-82 (GT) contribute to the UDP-N-acetyl-alpha-D-glucosamine site. Asp-102 provides a ligand contact to Mg(2+). UDP-N-acetyl-alpha-D-glucosamine-binding residues include Gly-135, Glu-149, Asn-164, and Asn-221. Mg(2+) is bound at residue Asn-221. The segment at 224–244 (FELSIAENFMQEKIKKYWMQQ) is linker. Residues 245-429 (GVIFHLPQST…KDYYYKKFQK (185 aa)) are N-acetyltransferase. Residues Arg-308 and Lys-325 each coordinate UDP-N-acetyl-alpha-D-glucosamine. The active-site Proton acceptor is the His-336. UDP-N-acetyl-alpha-D-glucosamine-binding residues include Tyr-339 and Asn-350. Acetyl-CoA contacts are provided by residues 359 to 360 (NY), Ser-378, Ala-396, and Arg-413.

This sequence in the N-terminal section; belongs to the N-acetylglucosamine-1-phosphate uridyltransferase family. In the C-terminal section; belongs to the transferase hexapeptide repeat family. Homotrimer. Mg(2+) serves as cofactor.

Its subcellular location is the cytoplasm. It carries out the reaction alpha-D-glucosamine 1-phosphate + acetyl-CoA = N-acetyl-alpha-D-glucosamine 1-phosphate + CoA + H(+). It catalyses the reaction N-acetyl-alpha-D-glucosamine 1-phosphate + UTP + H(+) = UDP-N-acetyl-alpha-D-glucosamine + diphosphate. It functions in the pathway nucleotide-sugar biosynthesis; UDP-N-acetyl-alpha-D-glucosamine biosynthesis; N-acetyl-alpha-D-glucosamine 1-phosphate from alpha-D-glucosamine 6-phosphate (route II): step 2/2. Its pathway is nucleotide-sugar biosynthesis; UDP-N-acetyl-alpha-D-glucosamine biosynthesis; UDP-N-acetyl-alpha-D-glucosamine from N-acetyl-alpha-D-glucosamine 1-phosphate: step 1/1. The protein operates within bacterial outer membrane biogenesis; LPS lipid A biosynthesis. Functionally, catalyzes the last two sequential reactions in the de novo biosynthetic pathway for UDP-N-acetylglucosamine (UDP-GlcNAc). The C-terminal domain catalyzes the transfer of acetyl group from acetyl coenzyme A to glucosamine-1-phosphate (GlcN-1-P) to produce N-acetylglucosamine-1-phosphate (GlcNAc-1-P), which is converted into UDP-GlcNAc by the transfer of uridine 5-monophosphate (from uridine 5-triphosphate), a reaction catalyzed by the N-terminal domain. This Campylobacter jejuni (strain RM1221) protein is Bifunctional protein GlmU.